The chain runs to 272 residues: Probable prolyl 4-hydroxylase 11 (272 aa).

The Cytoplasmic portion of the chain corresponds to 1–55; it reads MSKSTSVSTILYLRQRLQGLKIYETSDLIQHINTFDELVGEQVSVDVKIEEKTKD. Residues 56–80 form a helical; Signal-anchor for type II membrane protein membrane-spanning segment; sequence MILLCSLSPLLTTLTCSMVKVAASL. At 81–272 the chain is on the lumenal side; sequence RFPNERWLEV…KRHCLSLNLF (192 aa). In terms of domain architecture, Fe2OG dioxygenase spans 179-272; the sequence is NGETLQVINY…KRHCLSLNLF (94 aa). Residues histidine 197, aspartate 199, and histidine 261 each contribute to the Fe cation site.

Belongs to the P4HA family. Fe(2+) is required as a cofactor. Requires L-ascorbate as cofactor.

The protein resides in the endoplasmic reticulum membrane. It carries out the reaction L-prolyl-[collagen] + 2-oxoglutarate + O2 = trans-4-hydroxy-L-prolyl-[collagen] + succinate + CO2. Its function is as follows. Catalyzes the post-translational formation of 4-hydroxyproline in -Xaa-Pro-Gly- sequences in proline-rich peptide sequences of plant glycoproteins and other proteins. Hydroxyprolines are important constituent of many plant cell wall glycoproteins such as extensins, hydroxyproline-rich glycoproteins, lectins and arabinogalactan proteins. The chain is Probable prolyl 4-hydroxylase 11 from Arabidopsis thaliana (Mouse-ear cress).